A 76-amino-acid chain; its full sequence is Small ribosomal subunit protein eS17 (76 aa).

This sequence belongs to the eukaryotic ribosomal protein eS17 family.

This chain is Small ribosomal subunit protein eS17, found in Metallosphaera sedula (strain ATCC 51363 / DSM 5348 / JCM 9185 / NBRC 15509 / TH2).